A 101-amino-acid chain; its full sequence is MITLGHMLALGAVLFAISLAGIFLNRKNVIVLLMSIELMLLSVNVNFVAFSRQLGDPSGQLFVFFILTVAAAEAAIGLAILVTLFRTRRTINVGEVDSLKG.

The next 3 helical transmembrane spans lie at 4–24, 30–50, and 62–82; these read LGHM…GIFL, IVLL…FVAF, and FVFF…AILV.

Belongs to the complex I subunit 4L family. As to quaternary structure, NDH-1 is composed of 14 different subunits. Subunits NuoA, H, J, K, L, M, N constitute the membrane sector of the complex.

Its subcellular location is the cell inner membrane. The enzyme catalyses a quinone + NADH + 5 H(+)(in) = a quinol + NAD(+) + 4 H(+)(out). Functionally, NDH-1 shuttles electrons from NADH, via FMN and iron-sulfur (Fe-S) centers, to quinones in the respiratory chain. The immediate electron acceptor for the enzyme in this species is believed to be ubiquinone. Couples the redox reaction to proton translocation (for every two electrons transferred, four hydrogen ions are translocated across the cytoplasmic membrane), and thus conserves the redox energy in a proton gradient. In Stenotrophomonas maltophilia (strain R551-3), this protein is NADH-quinone oxidoreductase subunit K.